The sequence spans 189 residues: Sec-independent protein translocase protein TatB (189 aa).

Residues Met-1 to Gly-21 traverse the membrane as a helical segment. The tract at residues Thr-152–Ser-189 is disordered. Over residues Gln-153–Ser-189 the composition is skewed to polar residues.

Belongs to the TatB family. In terms of assembly, the Tat system comprises two distinct complexes: a TatABC complex, containing multiple copies of TatA, TatB and TatC subunits, and a separate TatA complex, containing only TatA subunits. Substrates initially bind to the TatABC complex, which probably triggers association of the separate TatA complex to form the active translocon.

It localises to the cell inner membrane. Functionally, part of the twin-arginine translocation (Tat) system that transports large folded proteins containing a characteristic twin-arginine motif in their signal peptide across membranes. Together with TatC, TatB is part of a receptor directly interacting with Tat signal peptides. TatB may form an oligomeric binding site that transiently accommodates folded Tat precursor proteins before their translocation. This Helicobacter hepaticus (strain ATCC 51449 / 3B1) protein is Sec-independent protein translocase protein TatB.